Here is a 162-residue protein sequence, read N- to C-terminus: Phosphopantetheine adenylyltransferase (162 aa).

Substrate is bound at residue T10. Residues 10–11 (TF) and H18 contribute to the ATP site. Residues K42, M74, and R88 each coordinate substrate. Residues 89–91 (GLR), E99, and 124–130 (YAFLSST) contribute to the ATP site.

The protein belongs to the bacterial CoaD family. Homohexamer. Mg(2+) is required as a cofactor.

It localises to the cytoplasm. It catalyses the reaction (R)-4'-phosphopantetheine + ATP + H(+) = 3'-dephospho-CoA + diphosphate. It participates in cofactor biosynthesis; coenzyme A biosynthesis; CoA from (R)-pantothenate: step 4/5. Reversibly transfers an adenylyl group from ATP to 4'-phosphopantetheine, yielding dephospho-CoA (dPCoA) and pyrophosphate. The protein is Phosphopantetheine adenylyltransferase of Aliivibrio salmonicida (strain LFI1238) (Vibrio salmonicida (strain LFI1238)).